The sequence spans 337 residues: Formamidase (337 aa).

The CN hydrolase domain occupies 14–257; the sequence is VVIGLVQLQL…DEIITAEVRP (244 aa). Residue E60 is the Proton acceptor of the active site. K129 serves as the catalytic Proton donor. C162 functions as the Nucleophile in the catalytic mechanism.

The protein belongs to the carbon-nitrogen hydrolase superfamily. Aliphatic amidase family.

The enzyme catalyses formamide + H2O = formate + NH4(+). Its function is as follows. Is an aliphatic amidase with a restricted substrate specificity, as it only hydrolyzes formamide. The protein is Formamidase of Bradyrhizobium sp. (strain ORS 278).